The following is a 121-amino-acid chain: SPbeta prophage-derived uncharacterized protein YorW (121 aa).

The protein is SPbeta prophage-derived uncharacterized protein YorW (yorW) of Bacillus subtilis (strain 168).